The primary structure comprises 92 residues: Long neurotoxin 1 (92 aa).

The signal sequence occupies residues 1–21 (MKTLLLTLVVVTIVCLDLGYT). 4 disulfide bridges follow: Cys-24–Cys-42, Cys-35–Cys-63, Cys-67–Cys-79, and Cys-80–Cys-85.

The protein belongs to the three-finger toxin family. Long-chain subfamily. Type II alpha-neurotoxin sub-subfamily. As to expression, expressed by the venom gland.

The protein localises to the secreted. Functionally, binds with high affinity to muscular (alpha-1/CHRNA1) and neuronal (alpha-7/CHRNA7) nicotinic acetylcholine receptor (nAChR) and inhibits acetylcholine from binding to the receptor, thereby impairing neuromuscular and neuronal transmission. This is Long neurotoxin 1 from Oxyuranus scutellatus scutellatus (Australian taipan).